Reading from the N-terminus, the 465-residue chain is Zinc finger and BTB domain-containing protein 32 (465 aa).

The 59-residue stretch at 29–87 (CDTLITVGGLEFPAHSLVLAGASPRLGCRGRWALVEDISPSTFAQILTFVYGESIELQP) folds into the BTB domain. Disordered regions lie at residues 111-179 (RAQK…EMAG) and 285-310 (QNQLASSSPTPGSFPQGTESLSPWQI). Basic and acidic residues-rich tracts occupy residues 123-139 (PGLKRHQQSEDFMRGSE) and 147-176 (EKQKPEKDFRSNGREQEMSHKHKAPGERPE). 3 consecutive C2H2-type zinc fingers follow at residues 350-372 (YSCSVCGKRFSLKHQMETHYRVH), 378-400 (FSCSLCPQRSRDFSAMTKHLRTH), and 405-427 (YRCPLCRAGCPSLASMQAHMRGH).

It belongs to the krueppel C2H2-type zinc-finger protein family. Homodimer (via PTB domain). Interacts with the N-terminal of FANCC. Interacts with ZBTB16. Interacts with GATA3. Isoform 1 is testis-specific and is not expressed in lymphoid organs such as thymus or spleen. Isoform 2 is expressed in both B- and T-lymphoid cells.

The protein resides in the nucleus. Functionally, DNA-binding protein that binds to the to a 5'-TGTACAGTGT-3' core sequence. May function as a transcriptional transactivator and transcriptional repressor. Probably exerts its repressor effect by preventing GATA3 from binding to DNA. May play a role in regulating the differentiation and activation of helper T-cells. The sequence is that of Zinc finger and BTB domain-containing protein 32 (Zbtb32) from Mus musculus (Mouse).